The chain runs to 105 residues: Nitrogen fixation nifHD region GlnB-like protein 1 (105 aa).

This sequence belongs to the P(II) protein family.

Could be involved in the regulation of nitrogen fixation. This is Nitrogen fixation nifHD region GlnB-like protein 1 (glnBA) from Methanobacterium ivanovii.